The sequence spans 369 residues: Hsc70-interacting protein (369 aa).

Positions 38–97 (MGGKVPPATQKAKSEENTKEEKPDSKKVEEDLKADEPSSEESDLEIDKEGVIEPDTDAPQ) are disordered. Over residues 49–73 (AKSEENTKEEKPDSKKVEEDLKADE) the composition is skewed to basic and acidic residues. TPR repeat units follow at residues 114 to 147 (ANDKKVAAIEALNDGELQKAIDLFTDAIKLNPRL), 148 to 181 (AILYAKRASVFVKLQKPNAAIRDCDRAIEINPDS), and 182 to 215 (AQPYKWRGKAHRLLGHWEEAAHDLALACKLDYDE). Positions 256–272 (KAREEHERAQREEEARR) are enriched in basic and acidic residues. Positions 256-300 (KAREEHERAQREEEARRQSGAQYGSFPGGFPGGMPGNFPGGMPGM) are disordered. Residues 281–300 (FPGGFPGGMPGNFPGGMPGM) are compositionally biased toward gly residues. Residues 319–358 (DPEVLAAMQDPEVMVAFQDVAQNPANMSKYQSNPKVMNLI) enclose the STI1 domain. Phosphoserine; by GRK5 is present on Ser-346. An N6-acetyllysine mark is found at Lys-353 and Lys-360.

The protein belongs to the FAM10 family. Homotetramer. Interacts with HSC70 as well as DNAJ homologs and HSP90. Interacts (via the C-terminus 303- 319 AA) with GRK5.

The protein resides in the cytoplasm. Its function is as follows. One HIP oligomer binds the ATPase domains of at least two HSC70 molecules dependent on activation of the HSC70 ATPase by HSP40. Stabilizes the ADP state of HSC70 that has a high affinity for substrate protein. Through its own chaperone activity, it may contribute to the interaction of HSC70 with various target proteins. This chain is Hsc70-interacting protein (ST13), found in Homo sapiens (Human).